The chain runs to 131 residues: Ribosome-binding factor A (131 aa).

This sequence belongs to the RbfA family. In terms of assembly, monomer. Binds 30S ribosomal subunits, but not 50S ribosomal subunits or 70S ribosomes.

The protein resides in the cytoplasm. In terms of biological role, one of several proteins that assist in the late maturation steps of the functional core of the 30S ribosomal subunit. Associates with free 30S ribosomal subunits (but not with 30S subunits that are part of 70S ribosomes or polysomes). Required for efficient processing of 16S rRNA. May interact with the 5'-terminal helix region of 16S rRNA. In Protochlamydia amoebophila (strain UWE25), this protein is Ribosome-binding factor A.